The following is a 462-amino-acid chain: Argininosuccinate lyase (462 aa).

It belongs to the lyase 1 family. Argininosuccinate lyase subfamily.

The protein localises to the cytoplasm. The catalysed reaction is 2-(N(omega)-L-arginino)succinate = fumarate + L-arginine. It participates in amino-acid biosynthesis; L-arginine biosynthesis; L-arginine from L-ornithine and carbamoyl phosphate: step 3/3. This chain is Argininosuccinate lyase, found in Exiguobacterium sp. (strain ATCC BAA-1283 / AT1b).